The sequence spans 499 residues: UTP--glucose-1-phosphate uridylyltransferase (499 aa).

The residue at position 2 (Ser-2) is an N-acetylserine. A Phosphoserine modification is found at Ser-17. The residue at position 19 (Thr-19) is a Phosphothreonine. 2 positions are modified to phosphoserine: Ser-21 and Ser-79. UTP is bound by residues 109-112 (LNGG), Lys-123, Gln-186, and Gly-215. A substrate-binding site is contributed by 111 to 112 (GG). Lys-123 provides a ligand contact to Mg(2+). Residues His-216 and 244-246 (NGD) contribute to the substrate site. A UTP-binding site is contributed by Asp-246. Asp-246 contacts Mg(2+). Residue Arg-369 is modified to Omega-N-methylarginine. UTP is bound at residue Lys-388. The active site involves Lys-388. Positions 448–499 (HLTITGNVFLGKDVTLRGTVIIVCSDGHKIDIPNGSILENVVVTGNLQILEH) are oligomerization.

Belongs to the UDPGP type 1 family. In terms of assembly, homooctamer.

The catalysed reaction is alpha-D-glucose 1-phosphate + UTP + H(+) = UDP-alpha-D-glucose + diphosphate. Plays a central role as a glucosyl donor in cellular metabolic pathways. The chain is UTP--glucose-1-phosphate uridylyltransferase from Saccharomyces cerevisiae (strain ATCC 204508 / S288c) (Baker's yeast).